Reading from the N-terminus, the 348-residue chain is MTAPSQVLKIRRPDDWHVHLRDGDMLKTVVPYTSEIYGRAIVMPNLASPITTVDAAIAYRQRILDAVPAGHDFTPLMTCYLTDSLDADELERGFHEGVFTAAKLYPANATTNSSHGVTSVDAIMPVLERMEKLGMPLLVHGEVTHADVDIFDREARFIDTVMEPLRQRLTALKVVFEHITTKDAAQYVRDGSYNLAATITPQHLMFNRNDMLVGGIRPHLYCLPILKRNIHQQALRDLVASGFTRAFLGTDSAPHSRHRKETRCGCAGCFNAPSALGSYAAVFEEMNALAHFEAFCSLNGPQFYGLPVNTGWVELVRDEQQIPENIALADDSLVPFLAGETVRWSVKK.

The Zn(2+) site is built by His17 and His19. Substrate is bound by residues 19-21 (HLR) and Asn45. Zn(2+)-binding residues include Lys103, His140, and His178. Lys103 bears the N6-carboxylysine mark. His140 contributes to the substrate binding site. Leu223 lines the substrate pocket. Asp251 provides a ligand contact to Zn(2+). The active site involves Asp251. Substrate contacts are provided by His255 and Ala267.

This sequence belongs to the metallo-dependent hydrolases superfamily. DHOase family. Class II DHOase subfamily. In terms of assembly, homodimer. Zn(2+) is required as a cofactor.

It catalyses the reaction (S)-dihydroorotate + H2O = N-carbamoyl-L-aspartate + H(+). Its pathway is pyrimidine metabolism; UMP biosynthesis via de novo pathway; (S)-dihydroorotate from bicarbonate: step 3/3. Its function is as follows. Catalyzes the reversible cyclization of carbamoyl aspartate to dihydroorotate. This Salmonella typhi protein is Dihydroorotase.